Reading from the N-terminus, the 142-residue chain is Large ribosomal subunit protein uL24 (142 aa).

Residues 1 to 11 (MKVNPFVSSDS) are compositionally biased toward polar residues. The interval 1–24 (MKVNPFVSSDSGKSRKAHFNAPSH) is disordered.

This sequence belongs to the universal ribosomal protein uL24 family.

This Caenorhabditis elegans protein is Large ribosomal subunit protein uL24 (rpl-26).